The chain runs to 522 residues: Neutral amino acid uniporter 4 (522 aa).

Transmembrane regions (helical) follow at residues 115 to 135 (AGVL…IHCM), 181 to 201 (LVDW…FVFL), 226 to 246 (SLDL…LVFI), 255 to 275 (LSFF…QYVI), 293 to 313 (YPLF…VLPL), 329 to 349 (IGMA…YFCF), 377 to 397 (FGIY…ILPA), 409 to 429 (LCEF…AVLI), 435 to 455 (VISF…PPLV), and 467 to 487 (PWVI…FIAG). Asn-515 carries N-linked (GlcNAc...) asparagine glycosylation.

It belongs to the amino acid/polyamine transporter 2 family.

Its subcellular location is the lysosome membrane. It carries out the reaction L-tryptophan(in) = L-tryptophan(out). The catalysed reaction is L-alanine(in) = L-alanine(out). It catalyses the reaction L-proline(in) = L-proline(out). Functionally, uniporter that mediates the transport of neutral amino acids like L-tryptophan, proline and alanine. The transport activity is sodium ions-independent, electroneutral and therefore functions via facilitated diffusion. This is Neutral amino acid uniporter 4 from Xenopus laevis (African clawed frog).